Here is a 472-residue protein sequence, read N- to C-terminus: UDP-N-acetylmuramate--L-alanine ligase (472 aa).

123–129 serves as a coordination point for ATP; sequence GSHGKTT.

The protein belongs to the MurCDEF family.

It localises to the cytoplasm. It catalyses the reaction UDP-N-acetyl-alpha-D-muramate + L-alanine + ATP = UDP-N-acetyl-alpha-D-muramoyl-L-alanine + ADP + phosphate + H(+). The protein operates within cell wall biogenesis; peptidoglycan biosynthesis. In terms of biological role, cell wall formation. In Solibacter usitatus (strain Ellin6076), this protein is UDP-N-acetylmuramate--L-alanine ligase.